The sequence spans 387 residues: Fiber protein 2 (387 aa).

Belongs to the adenoviridae fiber family. As to quaternary structure, homotrimer. Interacts with host receptor CXCAR. Interacts (via N-terminal tail region) with pentons.

It is found in the virion. Its subcellular location is the host nucleus. Its function is as follows. Forms spikes that protrude from each vertex of the icosahedral capsid. Interacts with host receptor CXCAR to provide virion initial attachment to target cell. Fiber proteins are shed during virus entry, when virus is still at the cell surface. The polypeptide is Fiber protein 2 (Homo sapiens (Human)).